We begin with the raw amino-acid sequence, 180 residues long: NADH-quinone oxidoreductase subunit I (180 aa).

4Fe-4S ferredoxin-type domains follow at residues 50 to 80 (LTRDPDGEERCVACNLCAVACPVGCISLQKA) and 90 to 119 (EFFRINFSRCIFCGLCEEACPTTAIQLTPD). [4Fe-4S] cluster-binding residues include C60, C63, C66, C70, C99, C102, C105, and C109.

The protein belongs to the complex I 23 kDa subunit family. In terms of assembly, NDH-1 is composed of 13 different subunits. Subunits NuoA, H, J, K, L, M, N constitute the membrane sector of the complex. Requires [4Fe-4S] cluster as cofactor.

The protein resides in the cell inner membrane. It catalyses the reaction a quinone + NADH + 5 H(+)(in) = a quinol + NAD(+) + 4 H(+)(out). In terms of biological role, NDH-1 shuttles electrons from NADH, via FMN and iron-sulfur (Fe-S) centers, to quinones in the respiratory chain. The immediate electron acceptor for the enzyme in this species is believed to be ubiquinone. Couples the redox reaction to proton translocation (for every two electrons transferred, four hydrogen ions are translocated across the cytoplasmic membrane), and thus conserves the redox energy in a proton gradient. The sequence is that of NADH-quinone oxidoreductase subunit I from Shigella boydii serotype 4 (strain Sb227).